The sequence spans 728 residues: Probable subtilase-type serine protease DR_A0283 (728 aa).

The first 22 residues, 1 to 22 (MPGALPMKKISLAVLSLTTLLA), serve as a signal peptide directing secretion. Positions 23-148 (ACGQPQTSPQ…RTAQDQLGAQ (126 aa)) are excised as a propeptide. Residues 159–471 (QYALDSNHLH…YGLIRMDKLA (313 aa)) form the Peptidase S8 domain. Active-site charge relay system residues include D188, H242, and S412.

The protein belongs to the peptidase S8 family.

The protein resides in the secreted. The polypeptide is Probable subtilase-type serine protease DR_A0283 (Deinococcus radiodurans (strain ATCC 13939 / DSM 20539 / JCM 16871 / CCUG 27074 / LMG 4051 / NBRC 15346 / NCIMB 9279 / VKM B-1422 / R1)).